A 543-amino-acid polypeptide reads, in one-letter code: Aspartate/alanine antiporter (543 aa).

10 helical membrane-spanning segments follow: residues 4–26 (IGNFLVGTPVFTIFICLALGYLL), 33–55 (SFTLGATVGVLIVALLIGQLGVF), 88–110 (FGAKIVYATLIFLVSAFIVAYAC), 117–139 (GPGIAAGIIAGGLTQSAVIGSSL), 159–178 (IPIVYTLTYVFGTIGVLIFL), 362–381 (IINYSWFALGIALSAALGIV), 385–407 (VSGVPIALGGGTASLIVGLVQSI), 428–450 (SIGLNLFIATVGLSAAKTFISAI), 455–477 (ISVLLIGAVISILPHIITFVICY), and 520–542 (VAPAYAIGNIFLTLMGPIFIVLL).

This sequence belongs to the AAE transporter (TC 2.A.81) family.

The protein resides in the cell membrane. Functionally, catalyzes the electrogenic exchange of aspartate with alanine. The chain is Aspartate/alanine antiporter (aspT) from Tetragenococcus halophilus (Pediococcus halophilus).